The following is a 424-amino-acid chain: Dehydrogenase FUM7 (424 aa).

This sequence belongs to the iron-containing alcohol dehydrogenase family. Fe cation serves as cofactor.

It functions in the pathway mycotoxin biosynthesis. Dehydrogenase; part of the gene cluster that mediates the biosynthesis of fumonisins B1 (FB1), B2 (FB2), B3 (FB3), and B4 (FB4), which are carcinogenic mycotoxins. Within the pathway, FUM7 is involved the addition of the tricarballylic moieties to the carbon backbone. FUM7 dehydrogenase removes the C-3 hydroxyl of citrate to form tricarballylic acid either before or after the CoA activation by the FUM10 acyl-CoA synthetase and FUM14 catalyzed esterification of CoA-activated tricarballylic acid to the C-14 and C-15 hydroxyls of the fumonisin backbone. The biosynthesis starts with the FUM1-catalyzed carbon chain assembly from one molecule of acetyl-CoA, eight molecules of malonyl-CoA, and two molecules of methionine (in S-adenosyl form). The C18 polyketide chain is released from the enzyme by a nucleophilic attack of a carbanion, which is derived from R-carbon of alanine by decarboxylation, on the carbonyl carbon of polyketide acyl chain. This step is catalyzed by the pyridoxal 5'-phosphate-dependent aminoacyl transferase FUM8. The resultant 3-keto intermediate is then stereospecifically reduced to a 3-hydroxyl product by reductase FUM13. Subsequent oxidations at C-10 by the cytochrome P450 monooxygenase FUM2, C-14 and C-15 by FUM6, FUM12 or FUM15, tricarballylic esterification of the hydroxyl groups on C-14 and C-15 by acyltransferase FUM14, and C-5 hydroxylation by 2-keto-glutarate-dependent dioxygenase FUM3 furnish the biosynthesis of fumonisins. The tricarballylic moieties are most likely derived from the citric acid cycle, and their addition to the carbon backbone may involve FUM7, FUM10, FUM11 and FUM14. The chain is Dehydrogenase FUM7 from Gibberella moniliformis (strain M3125 / FGSC 7600) (Maize ear and stalk rot fungus).